An 82-amino-acid chain; its full sequence is Small ribosomal subunit protein bS16 (82 aa).

It belongs to the bacterial ribosomal protein bS16 family.

In Shewanella sp. (strain MR-4), this protein is Small ribosomal subunit protein bS16.